The chain runs to 419 residues: Phospho-N-acetylmuramoyl-pentapeptide-transferase (419 aa).

10 helical membrane passes run 22–42 (YVSFRSAVAIILALLLATVIG), 72–92 (TPTMGGLIIIISILIPTLLLA), 99–119 (ILLMIVTTLLLGSLGFLDDYI), 135–155 (IIGQVGLGFIIGIVLYMNPAV), 208–228 (VLFGWILFVCVAVVVVTFISN), 238–258 (GLATGSSAIIGVVLAIFAYVS), 278–298 (LTIFAFAFVGATIGFLWYNAY), 303–323 (FMGDTGSLTLGGIIAVFALII), 328–348 (LLPILCFVFIIEGLSVMIQVF), and 396–416 (KITVRFWLVGIIMAAITIATL).

Belongs to the glycosyltransferase 4 family. MraY subfamily. The cofactor is Mg(2+).

Its subcellular location is the cell inner membrane. It carries out the reaction UDP-N-acetyl-alpha-D-muramoyl-L-alanyl-gamma-D-glutamyl-meso-2,6-diaminopimeloyl-D-alanyl-D-alanine + di-trans,octa-cis-undecaprenyl phosphate = di-trans,octa-cis-undecaprenyl diphospho-N-acetyl-alpha-D-muramoyl-L-alanyl-D-glutamyl-meso-2,6-diaminopimeloyl-D-alanyl-D-alanine + UMP. It functions in the pathway cell wall biogenesis; peptidoglycan biosynthesis. Its function is as follows. Catalyzes the initial step of the lipid cycle reactions in the biosynthesis of the cell wall peptidoglycan: transfers peptidoglycan precursor phospho-MurNAc-pentapeptide from UDP-MurNAc-pentapeptide onto the lipid carrier undecaprenyl phosphate, yielding undecaprenyl-pyrophosphoryl-MurNAc-pentapeptide, known as lipid I. The polypeptide is Phospho-N-acetylmuramoyl-pentapeptide-transferase (Porphyromonas gingivalis (strain ATCC 33277 / DSM 20709 / CIP 103683 / JCM 12257 / NCTC 11834 / 2561)).